We begin with the raw amino-acid sequence, 346 residues long: UDP-N-acetylenolpyruvoylglucosamine reductase (346 aa).

The 172-residue stretch at 18–189 (LRAQARAFIA…VSVVFALKTH (172 aa)) folds into the FAD-binding PCMH-type domain. R165 is an active-site residue. S240 (proton donor) is an active-site residue. Residue E336 is part of the active site.

Belongs to the MurB family. Requires FAD as cofactor.

Its subcellular location is the cytoplasm. It catalyses the reaction UDP-N-acetyl-alpha-D-muramate + NADP(+) = UDP-N-acetyl-3-O-(1-carboxyvinyl)-alpha-D-glucosamine + NADPH + H(+). Its pathway is cell wall biogenesis; peptidoglycan biosynthesis. Functionally, cell wall formation. The polypeptide is UDP-N-acetylenolpyruvoylglucosamine reductase (Neisseria meningitidis serogroup B (strain ATCC BAA-335 / MC58)).